The following is a 492-amino-acid chain: GlcNAc-binding protein A (492 aa).

Residues 1 to 23 (MNKSSTKTLIALSMMAVSSGVSA) form the signal peptide. The 181-residue stretch at 24–204 (HGYVSETNDG…AFYNVIDVKF (181 aa)) folds into the Chitin-binding type-4 domain. Residues 443-484 (AGTKVLAEDGNVYQCKEFPYSGYCVQWTETATNFAPGVGSDW) form the Chitin-binding type-3 domain.

It belongs to the GbpA family.

The protein resides in the secreted. Its function is as follows. Probably interacts with GlcNAc residues. May promote attachment to both epithelial cell surfaces and chitin. In Aliivibrio fischeri (strain ATCC 700601 / ES114) (Vibrio fischeri), this protein is GlcNAc-binding protein A.